Reading from the N-terminus, the 232-residue chain is Ribose-5-phosphate isomerase A (232 aa).

Substrate-binding positions include 31–34, 87–90, and 100–103; these read TGST, DGAD, and KGGG. The active-site Proton acceptor is E109. Residue K127 participates in substrate binding.

It belongs to the ribose 5-phosphate isomerase family. In terms of assembly, homodimer.

It catalyses the reaction aldehydo-D-ribose 5-phosphate = D-ribulose 5-phosphate. The protein operates within carbohydrate degradation; pentose phosphate pathway; D-ribose 5-phosphate from D-ribulose 5-phosphate (non-oxidative stage): step 1/1. Functionally, catalyzes the reversible conversion of ribose-5-phosphate to ribulose 5-phosphate. The sequence is that of Ribose-5-phosphate isomerase A from Bifidobacterium adolescentis (strain ATCC 15703 / DSM 20083 / NCTC 11814 / E194a).